We begin with the raw amino-acid sequence, 126 residues long: Small ribosomal subunit protein uS12m (126 aa).

Disordered regions lie at residues methionine 1–cysteine 27 and glycine 106–isoleucine 126. Composition is skewed to basic residues over residues arginine 12–alanine 23 and glycine 109–lysine 120.

Belongs to the universal ribosomal protein uS12 family.

It is found in the mitochondrion. Protein S12 is involved in the translation initiation step. The sequence is that of Small ribosomal subunit protein uS12m (RPS12) from Marchantia polymorpha (Common liverwort).